A 309-amino-acid chain; its full sequence is MASPVTVLENPIPKSGQHLLFFLTSKQQLALEQRPIESSLGYSAYVDHGVSQGVIVNPSSIAAAMRSSLITVYGITKPGTDKQYISVISPTYNLIANRQNQPIETTQKALAACSDNDRNNWVYYLNLPQGTAQYAIYELNIQDSTSAPTVYSGPTPSGNSNLAAVYFSPNKDRFIIFSNTDTRHYLYWVNSTLQSGNRIAGTGSVMSASPLAATTITNVQTRSMTIFLYYMDVNTLLNRIVGKVTDNEVHWYANQVVEGAPPMKVDTLLTGVVVEEKWNCLYYIPDGDTEFRAFNDTIRDSFFDEPREG.

Asn190 and Asn295 each carry an N-linked (GlcNAc...) asparagine glycan.

Its subcellular location is the secreted. The protein localises to the cell wall. The protein resides in the membrane. In terms of biological role, may participate in wall plasticization and/or intussusception or in cell wall turnover. This is Wall-associated proteinase from Coccidioides posadasii (strain RMSCC 757 / Silveira) (Valley fever fungus).